Consider the following 153-residue polypeptide: Ribosome maturation factor RimP (153 aa).

This sequence belongs to the RimP family.

It is found in the cytoplasm. Its function is as follows. Required for maturation of 30S ribosomal subunits. In Chromohalobacter salexigens (strain ATCC BAA-138 / DSM 3043 / CIP 106854 / NCIMB 13768 / 1H11), this protein is Ribosome maturation factor RimP.